A 489-amino-acid polypeptide reads, in one-letter code: Rhamnulokinase (489 aa).

13 to 17 is a binding site for ATP; sequence ASSGR. Cysteine 68 and cysteine 222 form a disulfide bridge. Substrate is bound by residues glycine 83 and 236–238; that span reads HDT. Aspartate 237 serves as the catalytic Proton acceptor. An ATP-binding site is contributed by threonine 259. A substrate-binding site is contributed by asparagine 296. Glutamine 304 serves as a coordination point for ATP. Cysteine 353 and cysteine 370 are oxidised to a cystine. An ATP-binding site is contributed by glycine 402. The cysteines at positions 413 and 417 are disulfide-linked.

It belongs to the rhamnulokinase family. Mg(2+) serves as cofactor.

The catalysed reaction is L-rhamnulose + ATP = L-rhamnulose 1-phosphate + ADP + H(+). It participates in carbohydrate degradation; L-rhamnose degradation; glycerone phosphate from L-rhamnose: step 2/3. Involved in the catabolism of L-rhamnose (6-deoxy-L-mannose). Catalyzes the transfer of the gamma-phosphate group from ATP to the 1-hydroxyl group of L-rhamnulose to yield L-rhamnulose 1-phosphate. The sequence is that of Rhamnulokinase from Salmonella paratyphi A (strain AKU_12601).